The following is a 552-amino-acid chain: Two-component response regulator ARR10 (552 aa).

Residues 18 to 133 (RVLAVDDDQT…ELKNIWQHVV (116 aa)) form the Response regulatory domain. Aspartate 69 carries the post-translational modification 4-aspartylphosphate. The interval 139 to 181 (KKNKSNVSNGSGNCDKANRKRKEQYEEEEEEERGNDNDDPTAQ) is disordered. Positions 151-173 (NCDKANRKRKEQYEEEEEEERGN) form a coiled coil. Residues 163-177 (YEEEEEEERGNDNDD) are compositionally biased toward acidic residues. A Nuclear localization signal motif is present at residues 182–185 (KKPR). A DNA-binding region (myb-like GARP) is located at residues 185-235 (RVLWTHELHNKFLAAVDHLGVERAVPKKILDLMNVDKLTRENVASHLQKFR).

This sequence belongs to the ARR family. Type-B subfamily. In terms of assembly, binds the target DNA as a monomer. Post-translationally, two-component system major event consists of a His-to-Asp phosphorelay between a sensor histidine kinase (HK) and a response regulator (RR). In plants, the His-to-Asp phosphorelay involves an additional intermediate named Histidine-containing phosphotransfer protein (HPt). This multistep phosphorelay consists of a His-Asp-His-Asp sequential transfer of a phosphate group between first a His and an Asp of the HK protein, followed by the transfer to a conserved His of the HPt protein and finally the transfer to an Asp in the receiver domain of the RR protein. As to expression, detected in the whole plant. Predominantly expressed in roots and leaves.

It localises to the nucleus. Transcriptional activator that binds specifically to the DNA sequence 5'-[AG]GATT-3'. Functions as a response regulator involved in His-to-Asp phosphorelay signal transduction system. Phosphorylation of the Asp residue in the receiver domain activates the ability of the protein to promote the transcription of target genes. Could directly activate some type-A response regulators in response to cytokinins. This is Two-component response regulator ARR10 (ARR10) from Arabidopsis thaliana (Mouse-ear cress).